Reading from the N-terminus, the 390-residue chain is Methylthioribose-1-phosphate isomerase (390 aa).

Asp-258 functions as the Proton donor in the catalytic mechanism.

The protein belongs to the eIF-2B alpha/beta/delta subunits family. MtnA subfamily.

The protein resides in the cytoplasm. It localises to the nucleus. It carries out the reaction 5-(methylsulfanyl)-alpha-D-ribose 1-phosphate = 5-(methylsulfanyl)-D-ribulose 1-phosphate. The protein operates within amino-acid biosynthesis; L-methionine biosynthesis via salvage pathway; L-methionine from S-methyl-5-thio-alpha-D-ribose 1-phosphate: step 1/6. In terms of biological role, catalyzes the interconversion of methylthioribose-1-phosphate (MTR-1-P) into methylthioribulose-1-phosphate (MTRu-1-P). The chain is Methylthioribose-1-phosphate isomerase from Coccidioides posadasii (strain C735) (Valley fever fungus).